The following is a 594-amino-acid chain: Cryptochrome-2 (594 aa).

In terms of domain architecture, Photolyase/cryptochrome alpha/beta spans 21–150; sequence ASSVHWFRKG…EVVTENSHTL (130 aa). Residue Lys-29 forms a Glycyl lysine isopeptide (Lys-Gly) (interchain with G-Cter in ubiquitin) linkage. Phosphoserine is present on Ser-89. Glycyl lysine isopeptide (Lys-Gly) (interchain with G-Cter in ubiquitin) cross-links involve residues Lys-125 and Lys-241. Position 265 is a phosphoserine; by MAPK (Ser-265). Position 270 (Ser-270) interacts with FAD. A Phosphoserine modification is found at Ser-298. Gln-307 serves as a coordination point for FAD. A Glycyl lysine isopeptide (Lys-Gly) (interchain with G-Cter in ubiquitin) cross-link involves residue Lys-347. FAD contacts are provided by residues His-373 and 405-407; that span reads DAD. Positions 389–488 are required for inhibition of CLOCK-BMAL1-mediated transcription; that stretch reads WVSWESGVRV…IIGVDYPRPI (100 aa). Glycyl lysine isopeptide (Lys-Gly) (interchain with G-Cter in ubiquitin) cross-links involve residues Lys-474 and Lys-503. The segment at 532 to 594 is disordered; the sequence is VAEPGSSQAG…PAQEPPSKDS (63 aa). Positions 536-547 are enriched in polar residues; sequence GSSQAGSISNTG. Ser-553 carries the post-translational modification Phosphoserine; by GSK3-beta. Position 557 is a phosphoserine; by DYRK1A and MAPK (Ser-557).

It belongs to the DNA photolyase class-1 family. In terms of assembly, component of the circadian core oscillator, which includes the CRY proteins, CLOCK or NPAS2, BMAL1 or BMAL2, CSNK1D and/or CSNK1E, TIMELESS, and the PER proteins. Interacts with TIMELESS. Interacts directly with PER1, PER2 and PER3; interaction with PER2 inhibits its ubiquitination and vice versa. Interacts with CLOCK-BMAL1. Interacts with CLOCK. Interacts with BMAL1. Interacts with NFIL3. Interacts with FBXL3 and FBXL21. FBXL3, PER2 and the cofactor FAD compete for overlapping binding sites. FBXL3 cannot bind CRY2 that interacts already with PER2 or that contains bound FAD. Interacts with PPP5C (via TPR repeats); the interaction down-regulates the PPP5C phosphatase activity on CSNK1E. Interacts with nuclear receptors AR and NR3C1/GR; the interaction is ligand dependent. Interacts with PRKDC and CIART. Interacts with DDB1, USP7 and TARDBP. Interacts with HNF4A and PPARA. Interacts with PPARD (via domain NR LBD) and NR1I2 (via domain NR LBD) in a ligand-dependent manner. Interacts with PPARG, NR1I3 and VDR in a ligand-dependent manner. FAD serves as cofactor. The cofactor is (6R)-5,10-methylene-5,6,7,8-tetrahydrofolate. In terms of processing, phosphorylation on Ser-265 by MAPK is important for the inhibition of CLOCK-BMAL1-mediated transcriptional activity. Phosphorylation by CSKNe requires interaction with PER1 or PER2. Phosphorylated in a circadian manner at Ser-553 and Ser-557 in the suprachiasmatic nucleus (SCN) and liver. Phosphorylation at Ser-557 by DYRK1A promotes subsequent phosphorylation at Ser-553 by GSK3-beta: the two-step phosphorylation at the neighboring Ser residues leads to its proteasomal degradation. Post-translationally, ubiquitinated by the SCF(FBXL3) and SCF(FBXL21) complexes, regulating the balance between degradation and stabilization. The SCF(FBXL3) complex is mainly nuclear and mediates ubiquitination and subsequent degradation of CRY2. In contrast, cytoplasmic SCF(FBXL21) complex-mediated ubiquitination leads to stabilize CRY2 and counteract the activity of the SCF(FBXL3) complex. The SCF(FBXL3) and SCF(FBXL21) complexes probably mediate ubiquitination at different Lys residues. The SCF(FBXL3) complex recognizes and binds CRY2 phosphorylated at Ser-553 and Ser-557. Ubiquitination may be inhibited by PER2. Deubiquitinated by USP7. Expressed in all tissues examined including heart, cerebellum, cerebral cortex, lung, liver, muscle, kidney and ovary. Highest levels in heart, liver and ovary. Highly expressed in the suprachiasmatic nucleus (SCN).

It localises to the cytoplasm. The protein resides in the nucleus. Functionally, transcriptional repressor which forms a core component of the circadian clock. The circadian clock, an internal time-keeping system, regulates various physiological processes through the generation of approximately 24 hour circadian rhythms in gene expression, which are translated into rhythms in metabolism and behavior. It is derived from the Latin roots 'circa' (about) and 'diem' (day) and acts as an important regulator of a wide array of physiological functions including metabolism, sleep, body temperature, blood pressure, endocrine, immune, cardiovascular, and renal function. Consists of two major components: the central clock, residing in the suprachiasmatic nucleus (SCN) of the brain, and the peripheral clocks that are present in nearly every tissue and organ system. Both the central and peripheral clocks can be reset by environmental cues, also known as Zeitgebers (German for 'timegivers'). The predominant Zeitgeber for the central clock is light, which is sensed by retina and signals directly to the SCN. The central clock entrains the peripheral clocks through neuronal and hormonal signals, body temperature and feeding-related cues, aligning all clocks with the external light/dark cycle. Circadian rhythms allow an organism to achieve temporal homeostasis with its environment at the molecular level by regulating gene expression to create a peak of protein expression once every 24 hours to control when a particular physiological process is most active with respect to the solar day. Transcription and translation of core clock components (CLOCK, NPAS2, BMAL1, BMAL2, PER1, PER2, PER3, CRY1 and CRY2) plays a critical role in rhythm generation, whereas delays imposed by post-translational modifications (PTMs) are important for determining the period (tau) of the rhythms (tau refers to the period of a rhythm and is the length, in time, of one complete cycle). A diurnal rhythm is synchronized with the day/night cycle, while the ultradian and infradian rhythms have a period shorter and longer than 24 hours, respectively. Disruptions in the circadian rhythms contribute to the pathology of cardiovascular diseases, cancer, metabolic syndromes and aging. A transcription/translation feedback loop (TTFL) forms the core of the molecular circadian clock mechanism. Transcription factors, CLOCK or NPAS2 and BMAL1 or BMAL2, form the positive limb of the feedback loop, act in the form of a heterodimer and activate the transcription of core clock genes and clock-controlled genes (involved in key metabolic processes), harboring E-box elements (5'-CACGTG-3') within their promoters. The core clock genes: PER1/2/3 and CRY1/2 which are transcriptional repressors form the negative limb of the feedback loop and interact with the CLOCK|NPAS2-BMAL1|BMAL2 heterodimer inhibiting its activity and thereby negatively regulating their own expression. This heterodimer also activates nuclear receptors NR1D1/2 and RORA/B/G, which form a second feedback loop and which activate and repress BMAL1 transcription, respectively. CRY1 and CRY2 have redundant functions but also differential and selective contributions at least in defining the pace of the SCN circadian clock and its circadian transcriptional outputs. Less potent transcriptional repressor in cerebellum and liver than CRY1, though less effective in lengthening the period of the SCN oscillator. Seems to play a critical role in tuning SCN circadian period by opposing the action of CRY1. With CRY1, dispensable for circadian rhythm generation but necessary for the development of intercellular networks for rhythm synchrony. May mediate circadian regulation of cAMP signaling and gluconeogenesis by blocking glucagon-mediated increases in intracellular cAMP concentrations and in CREB1 phosphorylation. Besides its role in the maintenance of the circadian clock, is also involved in the regulation of other processes. Plays a key role in glucose and lipid metabolism modulation, in part, through the transcriptional regulation of genes involved in these pathways, such as LEP or ACSL4. Represses glucocorticoid receptor NR3C1/GR-induced transcriptional activity by binding to glucocorticoid response elements (GREs). Represses the CLOCK-BMAL1 induced transcription of BHLHE40/DEC1 and NAMPT. Represses PPARD and its target genes in the skeletal muscle and limits exercise capacity. Represses the transcriptional activity of NR1I2. The protein is Cryptochrome-2 (Cry2) of Rattus norvegicus (Rat).